Reading from the N-terminus, the 624-residue chain is Chaperone protein HtpG (624 aa).

Residues 1 to 336 (MNMKGQETRG…SNDLPLNVSR (336 aa)) are a; substrate-binding. Positions 337-552 (EILQDSRITQ…ADEMSTQMAK (216 aa)) are b. Residues 553–624 (LFAAAGQQAP…IRRMNQLLTA (72 aa)) form a c region.

This sequence belongs to the heat shock protein 90 family. In terms of assembly, homodimer.

The protein localises to the cytoplasm. Functionally, molecular chaperone. Has ATPase activity. The sequence is that of Chaperone protein HtpG from Yersinia pestis bv. Antiqua (strain Antiqua).